A 687-amino-acid chain; its full sequence is DNA ligase (687 aa).

Residues 34–38, 83–84, and glutamate 117 each bind NAD(+); these read DAEYD and SL. Residue lysine 119 is the N6-AMP-lysine intermediate of the active site. 4 residues coordinate NAD(+): arginine 140, glutamate 182, lysine 298, and lysine 322. Zn(2+) contacts are provided by cysteine 416, cysteine 419, cysteine 434, and cysteine 439. One can recognise a BRCT domain in the interval 609-687; that stretch reads EARGPFAGKT…EEEFVRLLKE (79 aa).

The protein belongs to the NAD-dependent DNA ligase family. LigA subfamily. Requires Mg(2+) as cofactor. Mn(2+) serves as cofactor.

The catalysed reaction is NAD(+) + (deoxyribonucleotide)n-3'-hydroxyl + 5'-phospho-(deoxyribonucleotide)m = (deoxyribonucleotide)n+m + AMP + beta-nicotinamide D-nucleotide.. In terms of biological role, DNA ligase that catalyzes the formation of phosphodiester linkages between 5'-phosphoryl and 3'-hydroxyl groups in double-stranded DNA using NAD as a coenzyme and as the energy source for the reaction. It is essential for DNA replication and repair of damaged DNA. This Anaeromyxobacter dehalogenans (strain 2CP-C) protein is DNA ligase.